The primary structure comprises 281 residues: Light-independent protochlorophyllide reductase iron-sulfur ATP-binding protein (281 aa).

ATP-binding positions include 10-15 and Lys39; that span reads GIGKST. Ser14 lines the Mg(2+) pocket. Cys95 and Cys129 together coordinate [4Fe-4S] cluster. 180–181 is a binding site for ATP; it reads NR.

Belongs to the NifH/BchL/ChlL family. As to quaternary structure, homodimer. Protochlorophyllide reductase is composed of three subunits; ChlL, ChlN and ChlB. [4Fe-4S] cluster serves as cofactor.

The enzyme catalyses chlorophyllide a + oxidized 2[4Fe-4S]-[ferredoxin] + 2 ADP + 2 phosphate = protochlorophyllide a + reduced 2[4Fe-4S]-[ferredoxin] + 2 ATP + 2 H2O. Its pathway is porphyrin-containing compound metabolism; chlorophyll biosynthesis (light-independent). Component of the dark-operative protochlorophyllide reductase (DPOR) that uses Mg-ATP and reduced ferredoxin to reduce ring D of protochlorophyllide (Pchlide) to form chlorophyllide a (Chlide). This reaction is light-independent. The L component serves as a unique electron donor to the NB-component of the complex, and binds Mg-ATP. In Thermosynechococcus vestitus (strain NIES-2133 / IAM M-273 / BP-1), this protein is Light-independent protochlorophyllide reductase iron-sulfur ATP-binding protein.